The following is a 454-amino-acid chain: DNA-binding protein BIN4 (454 aa).

3 disordered regions span residues 24–53, 103–249, and 380–454; these read LLSL…DDGD, AGKE…DKDT, and TFES…KAKK. Residues 112–123 show a composition bias toward basic and acidic residues; the sequence is DCEKLSSKHKDA. The span at 132-150 shows a compositional bias: polar residues; the sequence is LVSSDSEPSSPIKQEVTVS. A compositionally biased stretch (basic and acidic residues) spans 229–249; the sequence is TPKEENCAQEILKTEDKDKDT. The segment covering 438-454 has biased composition (basic residues); that stretch reads PAKKARNSAPKKPKAKK.

In terms of assembly, interacts with TOP6A, RHL1 and itself, but not with TOP6B. In terms of tissue distribution, expressed in expanding cotyledons, vascular cells, elongating root cells, developing leaf trichomes, root and apical meristems and lateral root primordia.

The protein localises to the nucleus. Functionally, component of the DNA topoisomerase VI complex. Binds to DNA. Required for chromatin organization and progression of endoreduplication cycles. The loss of BIN4 activates the ATM- and ATR-dependent DNA damage responses in postmitotic cells and induces the ectopic expression of the mitotic G2/M-specific cyclin B1;1 gene in non-dividing cells. This is DNA-binding protein BIN4 (BIN4) from Arabidopsis thaliana (Mouse-ear cress).